The primary structure comprises 634 residues: UPF0329 protein ECU11_2090 (634 aa).

Basic and acidic residues-rich tracts occupy residues 354–365 and 397–407; these read REEREKREESKG and GESKEEDRGEE. Positions 354 to 438 are disordered; it reads REEREKREES…KGSGEKRISE (85 aa). Positions 408–417 are enriched in acidic residues; sequence GGVEAEDPLE.

Belongs to the UPF0329 family.

This is UPF0329 protein ECU11_2090 from Encephalitozoon cuniculi (strain GB-M1) (Microsporidian parasite).